Here is a 151-residue protein sequence, read N- to C-terminus: MVRAVCVLAGSGDVKGVVHFQQQDEGPVTVEGKIYGLTDGKHGFHIHEFGDNTNGCISAGPHFNPESKTHGAPEDAVRHVGDLGNVTAKDGVAEFKLTDSLISLKGNHSIIGRCAVVHEKEDDLGKGGNDESLKTGNAGGRLACGVIGLCQ.

Cys-6 is lipidated: S-palmitoyl cysteine. Cu cation is bound by residues His-45, His-47, and His-62. Cys-56 and Cys-144 form a disulfide bridge. Zn(2+) is bound by residues His-62, His-70, His-79, and Asp-82. His-118 serves as a coordination point for Cu cation.

It belongs to the Cu-Zn superoxide dismutase family. In terms of assembly, homodimer. Cu cation is required as a cofactor. It depends on Zn(2+) as a cofactor.

The protein resides in the cytoplasm. It localises to the nucleus. The enzyme catalyses 2 superoxide + 2 H(+) = H2O2 + O2. Destroys radicals which are normally produced within the cells and which are toxic to biological systems. The polypeptide is Superoxide dismutase [Cu-Zn] (sod1) (Xenopus tropicalis (Western clawed frog)).